The sequence spans 476 residues: Aspartyl/glutamyl-tRNA(Asn/Gln) amidotransferase subunit B (476 aa).

This sequence belongs to the GatB/GatE family. GatB subfamily. Heterotrimer of A, B and C subunits.

The catalysed reaction is L-glutamyl-tRNA(Gln) + L-glutamine + ATP + H2O = L-glutaminyl-tRNA(Gln) + L-glutamate + ADP + phosphate + H(+). It catalyses the reaction L-aspartyl-tRNA(Asn) + L-glutamine + ATP + H2O = L-asparaginyl-tRNA(Asn) + L-glutamate + ADP + phosphate + 2 H(+). Functionally, allows the formation of correctly charged Asn-tRNA(Asn) or Gln-tRNA(Gln) through the transamidation of misacylated Asp-tRNA(Asn) or Glu-tRNA(Gln) in organisms which lack either or both of asparaginyl-tRNA or glutaminyl-tRNA synthetases. The reaction takes place in the presence of glutamine and ATP through an activated phospho-Asp-tRNA(Asn) or phospho-Glu-tRNA(Gln). This chain is Aspartyl/glutamyl-tRNA(Asn/Gln) amidotransferase subunit B, found in Vesicomyosocius okutanii subsp. Calyptogena okutanii (strain HA).